The sequence spans 377 residues: F-box protein At1g11810 (377 aa).

Residues 2 to 48 enclose the F-box domain; that stretch reads TTTMSTLPVVLVDEILARVPITSLRSLRSTCKKWEASSKTNLVGGKA.

This chain is F-box protein At1g11810, found in Arabidopsis thaliana (Mouse-ear cress).